The chain runs to 533 residues: Pre-mRNA-splicing factor cwf24 (533 aa).

Over residues 1 to 17 the composition is skewed to polar residues; that stretch reads MEQKNLNINQASGSKIN. Positions 1 to 69 are disordered; that stretch reads MEQKNLNINQ…MRDNIPIVSG (69 aa). A compositionally biased stretch (basic residues) spans 27–43; it reads SRRRHRPRQGLKRKKGF. The C3H1-type zinc-finger motif lies at 184–212; it reads DYQPDVCKDYKLTGYCGYGDTCKFLHMRE. An RING-type zinc finger spans residues 254–292; the sequence is CLICKKDYRSPIATTCGHHFCEQCAITRYRKTPTCIQCG. Positions 379 to 524 constitute an N-acetyltransferase domain; that stretch reads YFIREITESN…SAFYMVCPLS (146 aa).

This sequence belongs to the CWC24 family. Belongs to the 40S cdc5-associated complex (or cwf complex), a spliceosome sub-complex reminiscent of a late-stage spliceosome composed of the U2, U5 and U6 snRNAs and at least brr2, cdc5, cwf2/prp3, cwf3/syf1, cwf4/syf3, cwf5/ecm2, spp42/cwf6, cwf7/spf27, cwf8, cwf9, cwf10, cwf11, cwf12, prp45/cwf13, cwf14, cwf15, cwf16, cwf17, cwf18, cwf19, cwf20, cwf21, cwf22, cwf23, cwf24, cwf25, cwf26, cyp7/cwf27, cwf28, cwf29/ist3, lea1, msl1, prp5/cwf1, prp10, prp12/sap130, prp17, prp22, sap61, sap62, sap114, sap145, slu7, smb1, smd1, smd3, smf1, smg1 and syf2.

It localises to the nucleus. In terms of biological role, involved in mRNA splicing. In Schizosaccharomyces pombe (strain 972 / ATCC 24843) (Fission yeast), this protein is Pre-mRNA-splicing factor cwf24 (cwf24).